The sequence spans 152 residues: Psoriasis susceptibility 1 candidate gene 1 protein (152 aa).

Over residues 1–31 (MTCTDQKSHSQRALGTQTPALQGPQLLNTDP) the composition is skewed to polar residues. The interval 1–42 (MTCTDQKSHSQRALGTQTPALQGPQLLNTDPSSEETRPPHVN) is disordered.

Expressed in skin. Also found in heart, placenta, liver, skeletal muscle and pancreas.

This chain is Psoriasis susceptibility 1 candidate gene 1 protein (PSORS1C1), found in Homo sapiens (Human).